We begin with the raw amino-acid sequence, 51 residues long: uncharacterized protein (51 aa).

The tract at residues 1–24 (MGGRFSGRVGIEKGGHPPSAADHS) is disordered.

This is an uncharacterized protein from Escherichia coli.